A 273-amino-acid polypeptide reads, in one-letter code: SKA complex subunit 1 homolog (273 aa).

Residues 77 to 97 (KKLVQRSLKEEEKLQHMLANL) are a coiled coil.

This sequence belongs to the SKA1 family.

This Zea mays (Maize) protein is SKA complex subunit 1 homolog.